The sequence spans 300 residues: Porphobilinogen deaminase (300 aa).

Residue Cys239 is modified to S-(dipyrrolylmethanemethyl)cysteine.

This sequence belongs to the HMBS family. As to quaternary structure, monomer. The cofactor is dipyrromethane.

It catalyses the reaction 4 porphobilinogen + H2O = hydroxymethylbilane + 4 NH4(+). The protein operates within porphyrin-containing compound metabolism; protoporphyrin-IX biosynthesis; coproporphyrinogen-III from 5-aminolevulinate: step 2/4. In terms of biological role, tetrapolymerization of the monopyrrole PBG into the hydroxymethylbilane pre-uroporphyrinogen in several discrete steps. The chain is Porphobilinogen deaminase from Francisella tularensis subsp. novicida (strain U112).